A 559-amino-acid polypeptide reads, in one-letter code: Dihydroxy-acid dehydratase (559 aa).

Residue C56 coordinates [2Fe-2S] cluster. D88 serves as a coordination point for Mg(2+). Residue C129 coordinates [2Fe-2S] cluster. Mg(2+) contacts are provided by D130 and K131. K131 bears the N6-carboxylysine mark. C198 lines the [2Fe-2S] cluster pocket. E449 contacts Mg(2+). Residue S475 is the Proton acceptor of the active site.

Belongs to the IlvD/Edd family. In terms of assembly, homodimer. [2Fe-2S] cluster is required as a cofactor. Mg(2+) serves as cofactor.

It catalyses the reaction (2R)-2,3-dihydroxy-3-methylbutanoate = 3-methyl-2-oxobutanoate + H2O. It carries out the reaction (2R,3R)-2,3-dihydroxy-3-methylpentanoate = (S)-3-methyl-2-oxopentanoate + H2O. It participates in amino-acid biosynthesis; L-isoleucine biosynthesis; L-isoleucine from 2-oxobutanoate: step 3/4. The protein operates within amino-acid biosynthesis; L-valine biosynthesis; L-valine from pyruvate: step 3/4. Functionally, functions in the biosynthesis of branched-chain amino acids. Catalyzes the dehydration of (2R,3R)-2,3-dihydroxy-3-methylpentanoate (2,3-dihydroxy-3-methylvalerate) into 2-oxo-3-methylpentanoate (2-oxo-3-methylvalerate) and of (2R)-2,3-dihydroxy-3-methylbutanoate (2,3-dihydroxyisovalerate) into 2-oxo-3-methylbutanoate (2-oxoisovalerate), the penultimate precursor to L-isoleucine and L-valine, respectively. In Ruthia magnifica subsp. Calyptogena magnifica, this protein is Dihydroxy-acid dehydratase.